The following is a 556-amino-acid chain: 2-isopropylmalate synthase (556 aa).

Positions 33 to 307 (PIWLSSDLRD…DPQLDFSDID (275 aa)) constitute a Pyruvate carboxyltransferase domain. Mg(2+)-binding residues include D42, H246, H248, and N282. Positions 439-556 (ATAPYTLKGH…ALHQAQEAAA (118 aa)) are regulatory domain.

This sequence belongs to the alpha-IPM synthase/homocitrate synthase family. LeuA type 2 subfamily. Homodimer. Mg(2+) serves as cofactor.

The protein resides in the cytoplasm. It carries out the reaction 3-methyl-2-oxobutanoate + acetyl-CoA + H2O = (2S)-2-isopropylmalate + CoA + H(+). The protein operates within amino-acid biosynthesis; L-leucine biosynthesis; L-leucine from 3-methyl-2-oxobutanoate: step 1/4. Its function is as follows. Catalyzes the condensation of the acetyl group of acetyl-CoA with 3-methyl-2-oxobutanoate (2-ketoisovalerate) to form 3-carboxy-3-hydroxy-4-methylpentanoate (2-isopropylmalate). The chain is 2-isopropylmalate synthase from Stutzerimonas stutzeri (strain A1501) (Pseudomonas stutzeri).